Consider the following 245-residue polypeptide: tRNA (guanine-N(1)-)-methyltransferase (245 aa).

Residues Gly111 and 131-136 (IGDYVL) contribute to the S-adenosyl-L-methionine site.

Belongs to the RNA methyltransferase TrmD family. In terms of assembly, homodimer.

The protein localises to the cytoplasm. It carries out the reaction guanosine(37) in tRNA + S-adenosyl-L-methionine = N(1)-methylguanosine(37) in tRNA + S-adenosyl-L-homocysteine + H(+). Specifically methylates guanosine-37 in various tRNAs. This Staphylococcus carnosus (strain TM300) protein is tRNA (guanine-N(1)-)-methyltransferase.